Here is a 1032-residue protein sequence, read N- to C-terminus: Beta-galactosidase (1032 aa).

Residues asparagine 100 and aspartate 198 each coordinate substrate. Aspartate 198 is a binding site for Na(+). The Mg(2+) site is built by glutamate 413, histidine 415, and glutamate 458. Substrate is bound by residues glutamate 458 and 534-537; that span reads EYAH. Catalysis depends on glutamate 458, which acts as the Proton donor. Catalysis depends on glutamate 534, which acts as the Nucleophile. Residue asparagine 594 coordinates Mg(2+). Residues phenylalanine 598 and asparagine 601 each coordinate Na(+). Residues asparagine 601 and tryptophan 1006 each contribute to the substrate site.

It belongs to the glycosyl hydrolase 2 family. Homotetramer. Mg(2+) serves as cofactor. Na(+) is required as a cofactor.

The catalysed reaction is Hydrolysis of terminal non-reducing beta-D-galactose residues in beta-D-galactosides.. In Vibrio vulnificus (strain CMCP6), this protein is Beta-galactosidase.